A 558-amino-acid polypeptide reads, in one-letter code: uncharacterized protein (558 aa).

In terms of domain architecture, DhaL spans 7 to 206; sequence SNFIDMLRLG…FACFLEGMLS (200 aa).

This is an uncharacterized protein from Mycoplasma pneumoniae (strain ATCC 29342 / M129 / Subtype 1) (Mycoplasmoides pneumoniae).